Consider the following 412-residue polypeptide: MASIAPSLKRAHAPLRKALTASSTIRAFATVPPTSSETTKPKRKSYFKDTTVAEFSDFLATSSPAQPLSPAEAFTLRTAEVGPEGKKRTITRLPEWLKTPIPAGNDNFKSIKKDLRGLGLHTVCEEARCPNISECWGGSDKNAATATIMLMGDTCTRGCRFCSVKTNRKPAALDPHEPENTAEALARWGLGYVVLTSVDRDDLADGGAHHFAETIRRIKQKKPSLLVEALTGDFRGDLDMVKVVAESGLDVYAHNVETVEDLTPYVRDRRATFRQSLSVLKHVKEVKGKEGIITKTSLMLGLGEQEHEVMAALEDLRKADVDVVTFGQYMRPTKRHLKVEKYVTPDEFEMWNKRALDMGFLYCASGPLVRSSYKAGEAFIENVLRKRSGEKAMARGTLAKAVALDSETRSSI.

Residues 1 to 28 constitute a mitochondrion transit peptide; sequence MASIAPSLKRAHAPLRKALTASSTIRAF. Positions 124, 129, 135, 155, 159, 162, and 372 each coordinate [4Fe-4S] cluster. Positions 138–361 constitute a Radical SAM core domain; that stretch reads GSDKNAATAT…NKRALDMGFL (224 aa).

This sequence belongs to the radical SAM superfamily. Lipoyl synthase family. The cofactor is [4Fe-4S] cluster.

Its subcellular location is the mitochondrion. It catalyses the reaction [[Fe-S] cluster scaffold protein carrying a second [4Fe-4S](2+) cluster] + N(6)-octanoyl-L-lysyl-[protein] + 2 oxidized [2Fe-2S]-[ferredoxin] + 2 S-adenosyl-L-methionine + 4 H(+) = [[Fe-S] cluster scaffold protein] + N(6)-[(R)-dihydrolipoyl]-L-lysyl-[protein] + 4 Fe(3+) + 2 hydrogen sulfide + 2 5'-deoxyadenosine + 2 L-methionine + 2 reduced [2Fe-2S]-[ferredoxin]. It functions in the pathway protein modification; protein lipoylation via endogenous pathway; protein N(6)-(lipoyl)lysine from octanoyl-[acyl-carrier-protein]: step 2/2. Its function is as follows. Catalyzes the radical-mediated insertion of two sulfur atoms into the C-6 and C-8 positions of the octanoyl moiety bound to the lipoyl domains of lipoate-dependent enzymes, thereby converting the octanoylated domains into lipoylated derivatives. The polypeptide is Lipoyl synthase, mitochondrial (Fusarium vanettenii (strain ATCC MYA-4622 / CBS 123669 / FGSC 9596 / NRRL 45880 / 77-13-4) (Fusarium solani subsp. pisi)).